The sequence spans 331 residues: Mitochondrial glycine transporter (331 aa).

Solcar repeat units lie at residues 19–103, 132–216, and 234–318; these read SRTT…LRQG, LSNW…LKRR, and SSSS…LILR. A run of 6 helical transmembrane segments spans residues 25-50, 78-104, 138-163, 191-214, 238-264, and 293-311; these read FAAG…TRVQ, GTLP…RQGL, LATG…VRYE, GFGA…EQLK, INFV…KTRL, and GLGL…AWTV.

The protein belongs to the mitochondrial carrier (TC 2.A.29) family. SLC25A38 subfamily.

Its subcellular location is the mitochondrion inner membrane. It carries out the reaction glycine(in) = glycine(out). Functionally, mitochondrial glycine transporter that imports glycine into the mitochondrial matrix. Plays an important role in providing glycine for the first enzymatic step in heme biosynthesis, the condensation of glycine with succinyl-CoA to produce 5-aminolevulinate (ALA) in the mitochondrial matrix. This Neosartorya fischeri (strain ATCC 1020 / DSM 3700 / CBS 544.65 / FGSC A1164 / JCM 1740 / NRRL 181 / WB 181) (Aspergillus fischerianus) protein is Mitochondrial glycine transporter.